A 346-amino-acid polypeptide reads, in one-letter code: Tryptophan--tRNA ligase (346 aa).

Residues 11–13 (RPT) and 19–20 (GH) each bind ATP. Residues 12–20 (PTGKLHLGH) carry the 'HIGH' region motif. Asp-143 is a binding site for L-tryptophan. Residues 155 to 157 (GKD), Leu-193, and 201 to 205 (KMSKS) contribute to the ATP site. A 'KMSKS' region motif is present at residues 201–205 (KMSKS).

This sequence belongs to the class-I aminoacyl-tRNA synthetase family. As to quaternary structure, homodimer.

The protein resides in the cytoplasm. It carries out the reaction tRNA(Trp) + L-tryptophan + ATP = L-tryptophyl-tRNA(Trp) + AMP + diphosphate + H(+). Catalyzes the attachment of tryptophan to tRNA(Trp). This chain is Tryptophan--tRNA ligase, found in Chlamydia muridarum (strain MoPn / Nigg).